The primary structure comprises 198 residues: Recombination protein RecR (198 aa).

The C4-type zinc finger occupies 57–72; the sequence is CSVCGRLTDDDPCIIC. The Toprim domain maps to 80-175; it reads TKILVVEDSK…KVTRLARGLA (96 aa).

This sequence belongs to the RecR family.

May play a role in DNA repair. It seems to be involved in an RecBC-independent recombinational process of DNA repair. It may act with RecF and RecO. This chain is Recombination protein RecR, found in Streptococcus thermophilus (strain CNRZ 1066).